The following is a 379-amino-acid chain: Cell growth-regulating nucleolar protein (379 aa).

C2HC LYAR-type zinc fingers lie at residues Met-1–Arg-26 and Cys-28–Ile-52. Zn(2+)-binding residues include Cys-6 and Cys-9. Residue Lys-14 forms a Glycyl lysine isopeptide (Lys-Gly) (interchain with G-Cter in SUMO2) linkage. The Zn(2+) site is built by His-21, Cys-25, Cys-33, Cys-36, His-48, and Cys-51. A disordered region spans residues Pro-161–Gly-307. 2 stretches are compositionally biased toward basic and acidic residues: residues Lys-173–Gln-196 and Lys-203–Arg-216. Residues Lys-175–Lys-219 adopt a coiled-coil conformation. Lys-207 participates in a covalent cross-link: Glycyl lysine isopeptide (Lys-Gly) (interchain with G-Cter in SUMO2). Ser-215 bears the Phosphoserine mark. Acidic residues predominate over residues Ala-229–Pro-239. Ser-244 bears the Phosphoserine mark. Basic and acidic residues-rich tracts occupy residues Lys-256–Arg-265 and Ser-276–Gly-295.

In terms of assembly, interacts with PRMT5; this interaction is direct. Interacts with GNL2 and RPL23A. Interacts with nucleolin/NCL; this interaction is direct. Interacts with phosphorylated IRF3; this interaction impairs IRF3 DNA-binding activity. As to expression, predominantly expressed in testis.

Its subcellular location is the nucleus. It is found in the nucleolus. It localises to the cytoplasm. The protein resides in the cell projection. The protein localises to the cilium. Its subcellular location is the photoreceptor outer segment. Plays a role in the maintenance of the appropriate processing of 47S/45S pre-rRNA to 32S/30S pre-rRNAs and their subsequent processing to produce 18S and 28S rRNAs. Also acts at the level of transcription regulation. Along with PRMT5, binds the gamma-globin (HBG1/HBG2) promoter and represses its expression. In neuroblastoma cells, may also repress the expression of oxidative stress genes, including CHAC1, HMOX1, SLC7A11, ULBP1 and SNORD41 that encodes a small nucleolar RNA. Preferentially binds to a DNA motif containing 5'-GGTTAT-3'. Negatively regulates the antiviral innate immune response by targeting IRF3 and impairing its DNA-binding activity. In addition, inhibits NF-kappa-B-mediated expression of pro-inflammatory cytokines. Stimulates phagocytosis of photoreceptor outer segments by retinal pigment epithelial cells. Prevents nucleolin/NCL self-cleavage, maintaining a normal steady-state level of NCL protein in undifferentiated embryonic stem cells (ESCs), which in turn is essential for ESC self-renewal. This Homo sapiens (Human) protein is Cell growth-regulating nucleolar protein (LYAR).